The primary structure comprises 411 residues: Serine hydroxymethyltransferase (411 aa).

(6S)-5,6,7,8-tetrahydrofolate-binding positions include Leu119 and 123–125 (GHL). An N6-(pyridoxal phosphate)lysine modification is found at Lys228. 351-353 (SPF) serves as a coordination point for (6S)-5,6,7,8-tetrahydrofolate.

This sequence belongs to the SHMT family. In terms of assembly, homodimer. The cofactor is pyridoxal 5'-phosphate.

The protein resides in the cytoplasm. The catalysed reaction is (6R)-5,10-methylene-5,6,7,8-tetrahydrofolate + glycine + H2O = (6S)-5,6,7,8-tetrahydrofolate + L-serine. It functions in the pathway one-carbon metabolism; tetrahydrofolate interconversion. Its pathway is amino-acid biosynthesis; glycine biosynthesis; glycine from L-serine: step 1/1. Its function is as follows. Catalyzes the reversible interconversion of serine and glycine with tetrahydrofolate (THF) serving as the one-carbon carrier. This reaction serves as the major source of one-carbon groups required for the biosynthesis of purines, thymidylate, methionine, and other important biomolecules. Also exhibits THF-independent aldolase activity toward beta-hydroxyamino acids, producing glycine and aldehydes, via a retro-aldol mechanism. The protein is Serine hydroxymethyltransferase of Clostridium novyi (strain NT).